A 456-amino-acid chain; its full sequence is uncharacterized protein (456 aa).

Low complexity predominate over residues 415 to 428; sequence SNSNGSSSSGNSSS. Residues 415-444 form a disordered region; it reads SNSNGSSSSGNSSSIYNSHLMNDKKKNNNA.

This is an uncharacterized protein from Saccharomyces cerevisiae (strain ATCC 204508 / S288c) (Baker's yeast).